Consider the following 294-residue polypeptide: Shell matrix protein (294 aa).

As to expression, component of the organic matrix of calcified shell layers like nacre and prisms.

It is found in the secreted. The sequence is that of Shell matrix protein from Mytilus californianus (California mussel).